The following is a 542-amino-acid chain: TNF receptor-associated factor 6 (542 aa).

The segment at 1-374 (MSLLHCENSC…EAQQCNGIYI (374 aa)) is interaction with TAX1BP1. The segment at 71 to 110 (CPICLMALREAVQTPCGHRFCKACIIKSIRDAGHKCPVDN) adopts an RING-type; degenerate zinc-finger fold. Lys-125 participates in a covalent cross-link: Glycyl lysine isopeptide (Lys-Gly) (interchain with G-Cter in SUMO); alternate. Lys-125 participates in a covalent cross-link: Glycyl lysine isopeptide (Lys-Gly) (interchain with G-Cter in ubiquitin); alternate. A Glycyl lysine isopeptide (Lys-Gly) (interchain with G-Cter in SUMO) cross-link involves residue Lys-143. TRAF-type zinc fingers lie at residues 151-203 (EHQA…EDKE) and 204-260 (IHEQ…NHLA). Positions 310-368 (SEVHNFQETIQQLEGRLVRQDHQIRELTAKMETQSMYVNELKRTIRTLEDKVAEIEAQQ) form a coiled coil. Residue Lys-339 forms a Glycyl lysine isopeptide (Lys-Gly) (interchain with G-Cter in ubiquitin) linkage. Residues 370–519 (NGIYIWKIGN…DDTLLVRCEV (150 aa)) enclose the MATH domain. An interaction with TANK region spans residues 375–542 (WKIGNFGMHL…FQPRSTDSGI (168 aa)). Lys-473 is covalently cross-linked (Glycyl lysine isopeptide (Lys-Gly) (interchain with G-Cter in SUMO)).

It belongs to the TNF receptor-associated factor family. A subfamily. As to quaternary structure, homotrimer. Homooligomer. N-terminal region is dimeric while C-terminal region is trimeric; maybe providing a mode of oligomerization. Upon IL1B treatment, forms a complex with PELI1, IRAK1, IRAK4 and MYD88; this complex recruits MAP3K7/TAK1, TAB1 and TAB2 to mediate NF-kappa-B activation. Direct binding of SMAD6 to PELI1 prevents the complex formation and hence negatively regulates IL1R-TLR signaling and eventually NF-kappa-B-mediated gene expression. Binds to TNFRSF5/CD40 and TNFRSF11A/RANK. Associates with NGFR, TNFRSF17, IRAK2, IRAK3, RIPK2, MAP3K1, MAP3K5, MAP3K14, CSK, TRAF, TRAF-interacting protein TRIP and TNF receptor associated protein TDP2. Interacts with IL17R. Interacts with SQSTM1 bridging NTRK1 and NGFR. Forms a ternary complex with SQSTM1 and PRKCZ. Interacts with PELI2 and PELI3. Binds UBE2V1. Interacts with TAX1BP1; this interaction mediates deubiquitination of TRAF6 and inhibition of NF-kappa-B activation. Interacts with ZNF675. Interacts with ARRB1 and ARRB2. Interacts with MAP3K7 and TAB1/MAP3K7IP1; during IL-1 signaling. Interacts with UBE2N. Interacts with TGFBR1, HDAC1 and RANGAP1. Interacts with AKT1, AKT2 and AKT3. Interacts (via TRAF domains) with NUMBL (via C-terminal). Interacts with RBCK1. Interacts with LIMD1 (via LIM domains). Interacts with RSAD2/viperin. Interacts (via C-terminus) with EIF2AK2/PKR (via the kinase catalytic domain). Interacts with ZFAND5. Interacts with IL1RL1. Interacts with TRAFD1. Interacts with AJUBA. Interacts with MAVS/IPS1. Interacts (via TRAF domains) with DYNC2I2 (via WD domains). Interacts with IFIT3 (via N-terminus). Interacts with TICAM2. Interacts with CARD14. Interacts with CD40 and MAP3K8; the interaction is required for ERK activation. Interacts with TICAM1 and this interaction is enhanced in the presence of WDFY1. Interacts with TANK; this interaction increases in response to DNA damage. Interacts with USP10; this interaction increases in response to DNA damage. Interacts with ZC3H12A; this interaction increases in response to DNA damage and is stimulated by TANK. Interacts with WDFY3. Interacts with TRIM13. Interacts with GPS2. Interacts (via C-terminus) with SASH1. Interacts with LRRC19. Interacts with IL17RA and TRAF3IP2. Interacts with TOMM70. Interacts with AMBRA1; interaction is required to mediate 'Lys-63'-linked ubiquitination of ULK1. Interacts with CRBN; this interaction inhibits TLR4-mediated signaling by preventing TRAF6-mediated ubiquitination of ECSIT. Post-translationally, sumoylated on Lys-125, Lys-143 and Lys-473 with SUMO1. In terms of processing, polyubiquitinated on Lys-125 by TRAF3IP2; after cell stimulation with IL17A. Polyubiquitinated on Lys-125; after cell stimulation with IL1B or TGFB. This ligand-induced cell stimulation leads to dimerization/oligomerization of TRAF6 molecules, followed by auto-ubiquitination which involves UBE2N and UBE2V1 and leads to TRAF6 activation. This 'Lys-63' site-specific poly-ubiquitination appears to be associated with the activation of signaling molecules. Endogenous autoubiquitination occurs only for the cytoplasmic form. Deubiquitinated by USP10 in a TANK-dependent manner, leading to the negative regulation of NF-kappa-B signaling upon DNA damage. LRRC19 induces 'Lys-63' ubiquitination. Ubiquitinated at Lys-339 by the SCF(FBXL2) complex, leading to its degradation by the proteasome.

The protein resides in the cytoplasm. It localises to the cell cortex. It is found in the nucleus. The protein localises to the lipid droplet. The catalysed reaction is S-ubiquitinyl-[E2 ubiquitin-conjugating enzyme]-L-cysteine + [acceptor protein]-L-lysine = [E2 ubiquitin-conjugating enzyme]-L-cysteine + N(6)-ubiquitinyl-[acceptor protein]-L-lysine.. It functions in the pathway protein modification; protein ubiquitination. Its function is as follows. E3 ubiquitin ligase that, together with UBE2N and UBE2V1, mediates the synthesis of 'Lys-63'-linked-polyubiquitin chains conjugated to proteins, such as ECSIT, IKBKG, IRAK1, AKT1 and AKT2. Also mediates ubiquitination of free/unanchored polyubiquitin chain that leads to MAP3K7 activation. Leads to the activation of NF-kappa-B and JUN. Seems to also play a role in dendritic cells (DCs) maturation and/or activation. Represses c-Myb-mediated transactivation, in B-lymphocytes. Adapter protein that seems to play a role in signal transduction initiated via TNF receptor, IL-1 receptor and IL-17 receptor. Regulates osteoclast differentiation by mediating the activation of adapter protein complex 1 (AP-1) and NF-kappa-B, in response to RANK-L stimulation. Together with MAP3K8, mediates CD40 signals that activate ERK in B-cells and macrophages, and thus may play a role in the regulation of immunoglobulin production. Acts as a regulator of the JNK and NF-kappa-B signaling pathways by initiating assembly of heterotypic 'Lys-63'-/'Lys-48'-linked branched ubiquitin chains that are then recognized by TAB2: TRAF6 catalyzes initial 'Lys-63'-linked-polyubiquitin chains that are then branched via 'Lys-48'-linked polyubiquitin by HUWE1. 'Lys-63'-/'Lys-48'-linked branched ubiquitin chains protect 'Lys-63'-linkages from CYLD deubiquitination. Also participates in the TCR signaling by ubiquitinating LAT. This Bos taurus (Bovine) protein is TNF receptor-associated factor 6 (TRAF6).